Consider the following 194-residue polypeptide: dTTP/UTP pyrophosphatase (194 aa).

Aspartate 76 serves as the catalytic Proton acceptor.

The protein belongs to the Maf family. YhdE subfamily. A divalent metal cation is required as a cofactor.

Its subcellular location is the cytoplasm. It catalyses the reaction dTTP + H2O = dTMP + diphosphate + H(+). The catalysed reaction is UTP + H2O = UMP + diphosphate + H(+). Nucleoside triphosphate pyrophosphatase that hydrolyzes dTTP and UTP. May have a dual role in cell division arrest and in preventing the incorporation of modified nucleotides into cellular nucleic acids. In Shewanella sp. (strain MR-7), this protein is dTTP/UTP pyrophosphatase.